Here is a 452-residue protein sequence, read N- to C-terminus: Mitochondrial import inner membrane translocase subunit TIM44 (452 aa).

Residue T128 is modified to Phosphothreonine. 166-173 lines the ATP pocket; the sequence is GGEKLGRT. Phosphoserine is present on S180. The residue at position 217 (K217) is an N6-succinyllysine.

It belongs to the Tim44 family. In terms of assembly, probable component of the PAM complex at least composed of a mitochondrial HSP70 protein, GRPEL1 or GRPEL2, TIMM44, TIMM16/PAM16 and TIMM14/DNAJC19. The complex interacts with the TIMM23 component of the TIM23 complex. Interacts with SLC25A4/ANT1 and SLC25A5/ANT2; leading to inhibit the presequence translocase TIMM23, thereby promoting stabilization of PINK1.

The protein resides in the mitochondrion inner membrane. The protein localises to the mitochondrion matrix. Its function is as follows. Essential component of the PAM complex, a complex required for the translocation of transit peptide-containing proteins from the inner membrane into the mitochondrial matrix in an ATP-dependent manner. Recruits mitochondrial HSP70 to drive protein translocation into the matrix using ATP as an energy source. The polypeptide is Mitochondrial import inner membrane translocase subunit TIM44 (TIMM44) (Homo sapiens (Human)).